Here is a 425-residue protein sequence, read N- to C-terminus: Serine--tRNA ligase (425 aa).

An L-serine-binding site is contributed by 231-233 (TAE). 262 to 264 (RSE) contacts ATP. E285 lines the L-serine pocket. Residue 349-352 (EISS) coordinates ATP. L-serine is bound at residue S385.

Belongs to the class-II aminoacyl-tRNA synthetase family. Type-1 seryl-tRNA synthetase subfamily. In terms of assembly, homodimer. The tRNA molecule binds across the dimer.

It localises to the cytoplasm. The enzyme catalyses tRNA(Ser) + L-serine + ATP = L-seryl-tRNA(Ser) + AMP + diphosphate + H(+). The catalysed reaction is tRNA(Sec) + L-serine + ATP = L-seryl-tRNA(Sec) + AMP + diphosphate + H(+). It participates in aminoacyl-tRNA biosynthesis; selenocysteinyl-tRNA(Sec) biosynthesis; L-seryl-tRNA(Sec) from L-serine and tRNA(Sec): step 1/1. Its function is as follows. Catalyzes the attachment of serine to tRNA(Ser). Is also able to aminoacylate tRNA(Sec) with serine, to form the misacylated tRNA L-seryl-tRNA(Sec), which will be further converted into selenocysteinyl-tRNA(Sec). The polypeptide is Serine--tRNA ligase (Bacillus licheniformis (strain ATCC 14580 / DSM 13 / JCM 2505 / CCUG 7422 / NBRC 12200 / NCIMB 9375 / NCTC 10341 / NRRL NRS-1264 / Gibson 46)).